Here is a 343-residue protein sequence, read N- to C-terminus: Geranylgeranyl pyrophosphate synthase 1 (343 aa).

The isopentenyl diphosphate site is built by lysine 43, arginine 46, and histidine 75. Mg(2+)-binding residues include aspartate 82 and aspartate 86. Position 91 (arginine 91) interacts with dimethylallyl diphosphate. Position 92 (arginine 92) interacts with isopentenyl diphosphate. 3 residues coordinate dimethylallyl diphosphate: lysine 169, threonine 170, and glutamine 212. Aspartate 215 is a binding site for Mg(2+). Positions 219, 229, and 239 each coordinate dimethylallyl diphosphate.

It belongs to the FPP/GGPP synthase family. Requires Mg(2+) as cofactor.

The catalysed reaction is isopentenyl diphosphate + dimethylallyl diphosphate = (2E)-geranyl diphosphate + diphosphate. It carries out the reaction isopentenyl diphosphate + (2E)-geranyl diphosphate = (2E,6E)-farnesyl diphosphate + diphosphate. It catalyses the reaction isopentenyl diphosphate + (2E,6E)-farnesyl diphosphate = (2E,6E,10E)-geranylgeranyl diphosphate + diphosphate. Geranylgeranyl pyrophosphate synthase; part of the gene cluster 4 that mediates the biosynthesis of an isoprenoid secondary metabolite. In Zymoseptoria tritici (strain CBS 115943 / IPO323) (Speckled leaf blotch fungus), this protein is Geranylgeranyl pyrophosphate synthase 1 (GGS1).